The following is a 405-amino-acid chain: Probable dual-specificity RNA methyltransferase RlmN (405 aa).

Residues 1–15 (MSSTGSSVSTSGLVL) show a composition bias toward low complexity. Positions 1 to 34 (MSSTGSSVSTSGLVLPSTPLAEPGKEVPLVVNTP) are disordered. Glu-130 serves as the catalytic Proton acceptor. The 245-residue stretch at 142-386 (SAARATLCLS…VTVRDTRGSE (245 aa)) folds into the Radical SAM core domain. An intrachain disulfide couples Cys-149 to Cys-391. [4Fe-4S] cluster contacts are provided by Cys-156, Cys-160, and Cys-163. Residues 211-212 (GE), Ser-245, 268-270 (SLH), and Asn-348 each bind S-adenosyl-L-methionine. Cys-391 (S-methylcysteine intermediate) is an active-site residue.

Belongs to the radical SAM superfamily. RlmN family. [4Fe-4S] cluster serves as cofactor.

Its subcellular location is the cytoplasm. It catalyses the reaction adenosine(2503) in 23S rRNA + 2 reduced [2Fe-2S]-[ferredoxin] + 2 S-adenosyl-L-methionine = 2-methyladenosine(2503) in 23S rRNA + 5'-deoxyadenosine + L-methionine + 2 oxidized [2Fe-2S]-[ferredoxin] + S-adenosyl-L-homocysteine. The catalysed reaction is adenosine(37) in tRNA + 2 reduced [2Fe-2S]-[ferredoxin] + 2 S-adenosyl-L-methionine = 2-methyladenosine(37) in tRNA + 5'-deoxyadenosine + L-methionine + 2 oxidized [2Fe-2S]-[ferredoxin] + S-adenosyl-L-homocysteine. Its function is as follows. Specifically methylates position 2 of adenine 2503 in 23S rRNA and position 2 of adenine 37 in tRNAs. The chain is Probable dual-specificity RNA methyltransferase RlmN from Cutibacterium acnes (strain DSM 16379 / KPA171202) (Propionibacterium acnes).